A 283-amino-acid chain; its full sequence is Syntaxin VAM3 (283 aa).

A disordered region spans residues 1–26; it reads MSFFDIEAQSSKGNSQQEPQFSTNQK. Over 1 to 261 the chain is Cytoplasmic; that stretch reads MSFFDIEAQS…ADQHQRDRNK (261 aa). The span at 8–25 shows a compositional bias: polar residues; the sequence is AQSSKGNSQQEPQFSTNQ. Coiled-coil stretches lie at residues 28 to 48 and 84 to 111; these read KELSNLIETFAEQSRVLEKEC and LIHQNGKLSADFKNLKTKYQSLQQSYNQ. Disordered regions lie at residues 116 to 146 and 162 to 182; these read FPLKTPISPGTSKERKDIHPRTEAVRQDPES and NEGQHQLQLQEEQEQQQQGLS. Basic and acidic residues predominate over residues 127–144; sequence SKERKDIHPRTEAVRQDP. Residues 169-189 are a coiled coil; it reads QLQEEQEQQQQGLSQEELDFQ. Residues 190–252 form the t-SNARE coiled-coil homology domain; that stretch reads TIIHQERSQQ…QNANKQLTRA (63 aa). Residues 262–282 form a helical; Anchor for type IV membrane protein membrane-spanning segment; sequence CGKVTLIIIIVVCMVVLLAVL. Position 283 (Ser-283) is a topological domain, vacuolar.

This sequence belongs to the syntaxin family. Associates with VAM7.

Its subcellular location is the vacuole membrane. Functionally, required for vacuolar assembly. Provides the t-SNARE function in a late step of the vacuolar assembly. Required for homotypic vacuole membrane fusion, autophagy and fusion of biosynthetic transport vesicles with the vacuole. Required for the delivery of alpha-factor receptor-ligand complexes to the vacuole. This chain is Syntaxin VAM3 (VAM3), found in Saccharomyces cerevisiae (strain ATCC 204508 / S288c) (Baker's yeast).